The following is a 301-amino-acid chain: Acetylglutamate kinase (301 aa).

Residues 71–72 (GG), arginine 93, and asparagine 198 contribute to the substrate site.

Belongs to the acetylglutamate kinase family. ArgB subfamily.

It localises to the cytoplasm. The enzyme catalyses N-acetyl-L-glutamate + ATP = N-acetyl-L-glutamyl 5-phosphate + ADP. Its pathway is amino-acid biosynthesis; L-arginine biosynthesis; N(2)-acetyl-L-ornithine from L-glutamate: step 2/4. Its function is as follows. Catalyzes the ATP-dependent phosphorylation of N-acetyl-L-glutamate. The protein is Acetylglutamate kinase of Rhizorhabdus wittichii (strain DSM 6014 / CCUG 31198 / JCM 15750 / NBRC 105917 / EY 4224 / RW1) (Sphingomonas wittichii).